Consider the following 62-residue polypeptide: Large ribosomal subunit protein bL32 (62 aa).

It belongs to the bacterial ribosomal protein bL32 family.

The sequence is that of Large ribosomal subunit protein bL32 from Levilactobacillus brevis (strain ATCC 367 / BCRC 12310 / CIP 105137 / JCM 1170 / LMG 11437 / NCIMB 947 / NCTC 947) (Lactobacillus brevis).